Here is a 643-residue protein sequence, read N- to C-terminus: MGRNWFQVTAMAVVPVVGIMAAVNPTILSSAASSLPSLGAMFTSDDFASQMDGRIQAQGLLSSHFGMYGWPGQSFDYVIVGGGTAGLAMARRLSQDGTASVAVIEAGGFYETDAGNATEVPMYLFNYFFDNGKVKNPLFDWYQYTTPQPGLAQREMFYMQGKTLGGSTARGAMLYHRGSKGAYDMWADHVGDDSYRWDKWLPYFQKSVHFSGPETNPRPANATALNDNTAFTASGGPVHVGYPFQVNAISSWVDRALAKMGFPEAQGFSNGNLLGRSYITHTINPYTRRRETASSSYLREALMESNNLNIFTRTLVKRVLFDDQNRATGVTVNTDGFEWQIGARKEVILSAGVMRSPQLLMVSGIGPKDHLEQLGIPVRSDLSGVGQNMQDTIILGPTVPVKVESHSQLMGNKETLPRAIREYNEQRKGLLTNPGQDYFAFEKHQPGMLKESTAADIDAAFPDDWPTFSYIALDDTFVPQYDGKNYFSMSAALMTPFSRGTVTINSNDTANPPIVDPQWLADPRDQEMAVAAFRRCREIVASDVMREVVAGPEILPGPQYQTDEEILNYIAETSDAYYAGVGTCAMGKADDPKAVVDSKARVLGVKGLRIVDASIFPFAIDGQPMGTVYALAEKIAAEMMAGQ.

The propeptide occupies 1–41 (MGRNWFQVTAMAVVPVVGIMAAVNPTILSSAASSLPSLGAM). Residues 84–85 (TA) and 105–106 (EA) each bind FAD. N-linked (GlcNAc...) asparagine glycosylation occurs at Asn116. 171–174 (GAML) contacts FAD. Asn221 and Asn507 each carry an N-linked (GlcNAc...) asparagine glycan. Residues Ala613 and 624 to 625 (PM) each bind FAD.

It belongs to the GMC oxidoreductase family. In terms of assembly, homodimer. FAD serves as cofactor. N-glycosylated.

Its subcellular location is the cytoplasm. It localises to the cytosol. The catalysed reaction is (2S-3S)-versiconal hemiacetal = versicolorin B + H2O. It carries out the reaction (S)-5'-oxoaverantin + H(+) = (1'S,5'S)-averufin + H2O. It participates in mycotoxin biosynthesis; aflatoxin biosynthesis. Its function is as follows. Dual cyclase; part of the gene cluster that mediates the biosynthesis of aflatoxins, a group of polyketide-derived furanocoumarins, and part of the most toxic and carcinogenic compounds among the known mycotoxins. The four major aflatoxins produced by A.parasiticus are aflatoxin B1 (AFB1), aflatoxin B2 (AFB2), aflatoxin G1 (AFG1) and aflatoxin G2 (AFG2). Aflk plays a dual role within the aflatoxin pathway, as a 5'-oxoaverantin cyclase that mediates conversion of 5'-oxoaverantin (OAVN) to averufin (AVF), as well as a versicolorin B synthase that converts versiconal (VAL) to versicolorin B (VERB) by closing the bisfuran ring of aflatoxin which is required for DNA-binding, thus giving to aflatoxin its activity as a mutagen. The biosynthesis of aflatoxins begins with the norsolorinic acid synthase aflC that combines a hexanoyl starter unit produced by the fatty acid synthase aflA/aflB and 7 malonyl-CoA extender units to synthesize the precursor NOR. The second step is the conversion of NOR to averantin and requires the norsolorinic acid ketoreductase aflD, which catalyzes the dehydration of norsolorinic acid to form (1'S)-averantin. The norsolorinic acid reductases aflE and aflF may also play a role in the conversion of NOR to AVN. The cytochrome P450 monooxygenase aflG then catalyzes the hydroxylation of AVN to 5'hydroxyaverantin (HAVN). The next step is performed by the 5'-hydroxyaverantin dehydrogenase aflH that transforms HAVN to 5'-oxoaverantin (OAVN) which is further converted to averufin (AVF) by aflK that plays a dual role in the pathway, as a 5'-oxoaverantin cyclase that mediates conversion of 5'-oxoaverantin, as well as a versicolorin B synthase in a later step in the pathway. The averufin oxidase aflI catalyzes the conversion of AVF to versiconal hemiacetal acetate (VHA). VHA is then the substrate for the versiconal hemiacetal acetate esterase aflJ to yield versiconal (VAL). Versicolorin B synthase aflK then converts VAL to versicolorin B (VERB) by closing the bisfuran ring of aflatoxin which is required for DNA-binding, thus giving to aflatoxin its activity as a mutagen. Then, the activity of the versicolorin B desaturase aflL leads to versicolorin A (VERA). A branch point starts from VERB since it can also be converted to dihydrodemethylsterigmatocystin (DMDHST), probably also by aflL, VERA being a precursor for aflatoxins B1 and G1, and DMDHST for aflatoxins B2 and G2. Next, the versicolorin reductase aflM and the cytochrome P450 monooxygenase aflN are involved in conversion of VERA to demethylsterigmatocystin (DMST). AflX and aflY seem also involved in this step, through probable aflX-mediated epoxide ring-opening step following versicolorin A oxidation and aflY-mediated Baeyer-Villiger oxidation required for the formation of the xanthone ring. The methyltransferase aflO then leads to the modification of DMST to sterigmatocystin (ST), and of DMDHST to dihydrosterigmatocystin (DHST). Both ST and DHST are then substrates of the O-methyltransferase aflP to yield O-methylsterigmatocystin (OMST) and dihydro-O-methylsterigmatocystin (DHOMST), respectively. Finally OMST is converted to aflatoxins B1 and G1, and DHOMST to aflatoxins B2 and G2, via the action of several enzymes including O-methylsterigmatocystin oxidoreductase aflQ, the cytochrome P450 monooxygenase aflU, but also the NADH-dependent flavin oxidoreductase nadA which is specifically required for the synthesis of AFG1. This Aspergillus parasiticus (strain ATCC 56775 / NRRL 5862 / SRRC 143 / SU-1) protein is Versicolorin B synthase.